The chain runs to 198 residues: Putative NADH dehydrogenase/NAD(P)H nitroreductase XOO4267 (198 aa).

The protein belongs to the nitroreductase family. HadB/RutE subfamily. Requires FMN as cofactor.

This chain is Putative NADH dehydrogenase/NAD(P)H nitroreductase XOO4267, found in Xanthomonas oryzae pv. oryzae (strain KACC10331 / KXO85).